A 221-amino-acid polypeptide reads, in one-letter code: Large ribosomal subunit protein uL4 (221 aa).

The disordered stretch occupies residues 44-102; sequence AARQGTHKVKRRGEVRGGGKKPYRQKGTGRARQGSTRAPQFAGGGVVHGPTPRDYSQRT. Over residues 61–72 the composition is skewed to basic residues; it reads GGKKPYRQKGTG.

It belongs to the universal ribosomal protein uL4 family. As to quaternary structure, part of the 50S ribosomal subunit.

One of the primary rRNA binding proteins, this protein initially binds near the 5'-end of the 23S rRNA. It is important during the early stages of 50S assembly. It makes multiple contacts with different domains of the 23S rRNA in the assembled 50S subunit and ribosome. In terms of biological role, forms part of the polypeptide exit tunnel. The protein is Large ribosomal subunit protein uL4 of Streptomyces avermitilis (strain ATCC 31267 / DSM 46492 / JCM 5070 / NBRC 14893 / NCIMB 12804 / NRRL 8165 / MA-4680).